Here is a 295-residue protein sequence, read N- to C-terminus: Farnesyl diphosphate synthase (295 aa).

Residues K46, R49, and H78 each coordinate isopentenyl diphosphate. Residues D85 and D91 each coordinate Mg(2+). R96 contacts (2E)-geranyl diphosphate. R97 serves as a coordination point for isopentenyl diphosphate. The (2E)-geranyl diphosphate site is built by K180, T181, Q220, and K237.

It belongs to the FPP/GGPP synthase family. Requires Mg(2+) as cofactor.

It localises to the cytoplasm. It catalyses the reaction isopentenyl diphosphate + (2E)-geranyl diphosphate = (2E,6E)-farnesyl diphosphate + diphosphate. The polypeptide is Farnesyl diphosphate synthase (ispA) (Haemophilus influenzae (strain ATCC 51907 / DSM 11121 / KW20 / Rd)).